Here is a 392-residue protein sequence, read N- to C-terminus: Speckle-type POZ protein-like (392 aa).

An MATH domain is found at 31–161; that stretch reads KFSYMWTINN…DDKLTLYCEV (131 aa). The BTB domain occupies 200-267; sequence TDCSLFVEGK…IYTGGTPHVD (68 aa).

This sequence belongs to the Tdpoz family. As to quaternary structure, homodimer. Heterodimer with SPOP. Component of cullin-RING-based BCR (BTB-CUL3-RBX1) E3 ubiquitin-protein ligase complexes containing homodimeric SPOPL or the heterodimer formed by SPOP and SPOPL.

It is found in the nucleus. It functions in the pathway protein modification; protein ubiquitination. Its function is as follows. Component of a cullin-RING-based BCR (BTB-CUL3-RBX1) E3 ubiquitin-protein ligase complex that mediates the ubiquitination and subsequent proteasomal degradation of target proteins, but with relatively low efficiency. In Xenopus laevis (African clawed frog), this protein is Speckle-type POZ protein-like (spopl).